Here is a 237-residue protein sequence, read N- to C-terminus: Phosphoribosylaminoimidazole-succinocarboxamide synthase (237 aa).

The protein belongs to the SAICAR synthetase family.

It carries out the reaction 5-amino-1-(5-phospho-D-ribosyl)imidazole-4-carboxylate + L-aspartate + ATP = (2S)-2-[5-amino-1-(5-phospho-beta-D-ribosyl)imidazole-4-carboxamido]succinate + ADP + phosphate + 2 H(+). It functions in the pathway purine metabolism; IMP biosynthesis via de novo pathway; 5-amino-1-(5-phospho-D-ribosyl)imidazole-4-carboxamide from 5-amino-1-(5-phospho-D-ribosyl)imidazole-4-carboxylate: step 1/2. The sequence is that of Phosphoribosylaminoimidazole-succinocarboxamide synthase from Listeria monocytogenes serotype 4b (strain CLIP80459).